A 485-amino-acid chain; its full sequence is MQHLSILLVVLGSSIAFAQHDPHFADGRNTIVHLFGWKWGDIASECENWLRKKGFAGVQISPPSENPIVSGRPWWENYQPVSYDLKNRNGDEDSLSDMIKRCNNVGVRIYADLVVNHMATSIGQGTADHSYDPGSKSYPAVPYSNENFHASCDIDYNDAASIRNCELSGLKDLDQSQDYVRGKIVDYMNHLVSLGVAGFRVDAAKHMWPADLAAIFGSVNDLNTDFFPSGSRAYIYQEVIDTGSDPIDNKDYTGFGSVCEFKYGIQLATCFRGSNPLKYLENWGTGWGLLDGGNTLVFIDNHDTERSSGSYLNYKESRAYKAANAFMLAHPYDGITKIMSSYDFSDNDQSPPSDGDNILSPGFKEDGTCTNGWICQHRWSPIFNMVEFRSVVSGIELTNWWSGGDYQIAFSRGTKGTIAISINDSLDSDVPTGLPDGTYCDVISGSLSNGSCTGKSITVSGGKAHISIASDDREAAVAIHANAKL.

The signal sequence occupies residues 1–18 (MQHLSILLVVLGSSIAFA). A Pyrrolidone carboxylic acid modification is found at Gln19. Cys46 and Cys102 are disulfide-bonded. Residues Asn116, Arg163, and Asp172 each coordinate Ca(2+). An intrachain disulfide couples Cys152 to Cys165. Arg200 lines the chloride pocket. The Nucleophile role is filled by Asp202. Residue His206 participates in Ca(2+) binding. Catalysis depends on Glu238, which acts as the Proton donor. Asn301 is a chloride binding site. Cys369 and Cys375 are joined by a disulfide. 2 N-linked (GlcNAc...) asparagine glycosylation sites follow: Asn423 and Asn449. Residues Cys440 and Cys452 are joined by a disulfide bond.

Belongs to the glycosyl hydrolase 13 family. In terms of assembly, monomer. It depends on Ca(2+) as a cofactor. The cofactor is chloride.

The enzyme catalyses Endohydrolysis of (1-&gt;4)-alpha-D-glucosidic linkages in polysaccharides containing three or more (1-&gt;4)-alpha-linked D-glucose units.. In terms of biological role, involved in the digestion of starch. The chain is Alpha-amylase from Hypothenemus hampei (Coffee berry borer).